The following is a 216-amino-acid chain: Thiamine-phosphate synthase (216 aa).

4-amino-2-methyl-5-(diphosphooxymethyl)pyrimidine-binding positions include 37-41 (QVRSK) and Asp-68. Residues Asp-69 and Asp-93 each coordinate Mg(2+). 4-amino-2-methyl-5-(diphosphooxymethyl)pyrimidine is bound at residue Thr-112. 140-142 (TPT) is a 2-[(2R,5Z)-2-carboxy-4-methylthiazol-5(2H)-ylidene]ethyl phosphate binding site. 4-amino-2-methyl-5-(diphosphooxymethyl)pyrimidine is bound at residue Lys-143.

Belongs to the thiamine-phosphate synthase family. The cofactor is Mg(2+).

It catalyses the reaction 2-[(2R,5Z)-2-carboxy-4-methylthiazol-5(2H)-ylidene]ethyl phosphate + 4-amino-2-methyl-5-(diphosphooxymethyl)pyrimidine + 2 H(+) = thiamine phosphate + CO2 + diphosphate. The enzyme catalyses 2-(2-carboxy-4-methylthiazol-5-yl)ethyl phosphate + 4-amino-2-methyl-5-(diphosphooxymethyl)pyrimidine + 2 H(+) = thiamine phosphate + CO2 + diphosphate. It carries out the reaction 4-methyl-5-(2-phosphooxyethyl)-thiazole + 4-amino-2-methyl-5-(diphosphooxymethyl)pyrimidine + H(+) = thiamine phosphate + diphosphate. It participates in cofactor biosynthesis; thiamine diphosphate biosynthesis; thiamine phosphate from 4-amino-2-methyl-5-diphosphomethylpyrimidine and 4-methyl-5-(2-phosphoethyl)-thiazole: step 1/1. Functionally, condenses 4-methyl-5-(beta-hydroxyethyl)thiazole monophosphate (THZ-P) and 2-methyl-4-amino-5-hydroxymethyl pyrimidine pyrophosphate (HMP-PP) to form thiamine monophosphate (TMP). The sequence is that of Thiamine-phosphate synthase from Corynebacterium efficiens (strain DSM 44549 / YS-314 / AJ 12310 / JCM 11189 / NBRC 100395).